Consider the following 1067-residue polypeptide: Ubiquitin carboxyl-terminal hydrolase 26 (1067 aa).

The segment covering Met-1–Arg-12 has biased composition (basic residues). The disordered stretch occupies residues Met-1–Ser-22. The USP domain maps to Ala-106–Arg-442. Cys-115 functions as the Nucleophile in the catalytic mechanism. His-359 acts as the Proton acceptor in catalysis. A disordered region spans residues Lys-385–Ser-418. Residues Glu-390 to Ser-418 show a composition bias toward polar residues. DUSP domains are found at residues Asn-503–Cys-595, Asp-610–Cys-711, and Thr-738–Ile-861. The Ubiquitin-like domain occupies Phe-948–Glu-1031.

This sequence belongs to the peptidase C19 family. In terms of tissue distribution, expressed in seedlings, roots, stems, leaves and inflorescences.

The protein resides in the nucleus. It carries out the reaction Thiol-dependent hydrolysis of ester, thioester, amide, peptide and isopeptide bonds formed by the C-terminal Gly of ubiquitin (a 76-residue protein attached to proteins as an intracellular targeting signal).. Recognizes and hydrolyzes the peptide bond at the C-terminal Gly of ubiquitin. Involved in the processing of poly-ubiquitin precursors as well as that of ubiquitinated proteins. Deubiquitinates H2BK143ub1 of histone H2B. In Arabidopsis thaliana (Mouse-ear cress), this protein is Ubiquitin carboxyl-terminal hydrolase 26 (UBP26).